The primary structure comprises 142 residues: Antirestriction protein KlcA (142 aa).

The protein belongs to the antirestriction protein family.

Functionally, could be involved in overcoming restriction barriers during establishment after conjugative transfer. This is Antirestriction protein KlcA (klcA) from Escherichia coli.